The primary structure comprises 338 residues: L-serine dehydratase (338 aa).

Lysine 39 bears the N6-(pyridoxal phosphate)lysine mark.

Belongs to the serine/threonine dehydratase family. Requires pyridoxal 5'-phosphate as cofactor.

Its subcellular location is the cytoplasm. The catalysed reaction is L-serine = pyruvate + NH4(+). It functions in the pathway carbohydrate biosynthesis; gluconeogenesis. The sequence is that of L-serine dehydratase (SDL1) from Saccharomyces cerevisiae (Baker's yeast).